We begin with the raw amino-acid sequence, 46 residues long: Protein PsbN (46 aa).

Residues 10 to 30 traverse the membrane as a helical segment; that stretch reads LAIIVLVVLLGLTGLGVYMAF.

The protein belongs to the PsbN family.

The protein resides in the cellular thylakoid membrane. Its function is as follows. May play a role in photosystem I and II biogenesis. This Prochlorococcus marinus (strain MIT 9211) protein is Protein PsbN.